We begin with the raw amino-acid sequence, 310 residues long: UPF0761 membrane protein VFMJ11_0098 (310 aa).

A run of 6 helical transmembrane segments spans residues 34–54, 97–117, 136–156, 178–198, 207–227, and 242–262; these read YMAY…LSVL, MTAV…SSID, FSLY…SLAA, LLGW…YLLV, HALI…VGFA, and ALAA…IVLI.

The protein belongs to the UPF0761 family.

The protein localises to the cell inner membrane. The protein is UPF0761 membrane protein VFMJ11_0098 of Aliivibrio fischeri (strain MJ11) (Vibrio fischeri).